The chain runs to 196 residues: Protein GrpE (196 aa).

The disordered stretch occupies residues 1-41; the sequence is MSSKEQKTPEGQAPEEIITEQHDDVEAVEPEVSAEQVDPRD.

Belongs to the GrpE family. In terms of assembly, homodimer.

It is found in the cytoplasm. Participates actively in the response to hyperosmotic and heat shock by preventing the aggregation of stress-denatured proteins, in association with DnaK and GrpE. It is the nucleotide exchange factor for DnaK and may function as a thermosensor. Unfolded proteins bind initially to DnaJ; upon interaction with the DnaJ-bound protein, DnaK hydrolyzes its bound ATP, resulting in the formation of a stable complex. GrpE releases ADP from DnaK; ATP binding to DnaK triggers the release of the substrate protein, thus completing the reaction cycle. Several rounds of ATP-dependent interactions between DnaJ, DnaK and GrpE are required for fully efficient folding. In Klebsiella pneumoniae (strain 342), this protein is Protein GrpE.